We begin with the raw amino-acid sequence, 422 residues long: Serine--tRNA ligase (422 aa).

An L-serine-binding site is contributed by 229 to 231; the sequence is TAE. Residue 260–262 coordinates ATP; it reads RKE. Residue Glu283 coordinates L-serine. 347 to 350 provides a ligand contact to ATP; it reads EISS. Ser383 serves as a coordination point for L-serine.

It belongs to the class-II aminoacyl-tRNA synthetase family. Type-1 seryl-tRNA synthetase subfamily. In terms of assembly, homodimer. The tRNA molecule binds across the dimer.

It localises to the cytoplasm. It carries out the reaction tRNA(Ser) + L-serine + ATP = L-seryl-tRNA(Ser) + AMP + diphosphate + H(+). It catalyses the reaction tRNA(Sec) + L-serine + ATP = L-seryl-tRNA(Sec) + AMP + diphosphate + H(+). It participates in aminoacyl-tRNA biosynthesis; selenocysteinyl-tRNA(Sec) biosynthesis; L-seryl-tRNA(Sec) from L-serine and tRNA(Sec): step 1/1. Functionally, catalyzes the attachment of serine to tRNA(Ser). Is also able to aminoacylate tRNA(Sec) with serine, to form the misacylated tRNA L-seryl-tRNA(Sec), which will be further converted into selenocysteinyl-tRNA(Sec). This is Serine--tRNA ligase from Citrifermentans bemidjiense (strain ATCC BAA-1014 / DSM 16622 / JCM 12645 / Bem) (Geobacter bemidjiensis).